A 1005-amino-acid polypeptide reads, in one-letter code: Isoleucine--tRNA ligase (1005 aa).

Residues 70–80 (PYANGNIHIGH) carry the 'HIGH' region motif. Glu629 contributes to the L-isoleucyl-5'-AMP binding site. A 'KMSKS' region motif is present at residues 670–674 (KMSKS). Lys673 is a binding site for ATP.

Belongs to the class-I aminoacyl-tRNA synthetase family. IleS type 1 subfamily. As to quaternary structure, monomer.

It localises to the cytoplasm. It carries out the reaction tRNA(Ile) + L-isoleucine + ATP = L-isoleucyl-tRNA(Ile) + AMP + diphosphate. Catalyzes the attachment of isoleucine to tRNA(Ile). As IleRS can inadvertently accommodate and process structurally similar amino acids such as valine, to avoid such errors it has two additional distinct tRNA(Ile)-dependent editing activities. One activity is designated as 'pretransfer' editing and involves the hydrolysis of activated Val-AMP. The other activity is designated 'posttransfer' editing and involves deacylation of mischarged Val-tRNA(Ile). This is Isoleucine--tRNA ligase from Rhodopseudomonas palustris (strain ATCC BAA-98 / CGA009).